The sequence spans 139 residues: Nucleoside diphosphate kinase (139 aa).

The ATP site is built by lysine 11, phenylalanine 59, arginine 87, threonine 93, arginine 104, and asparagine 114. Histidine 117 (pros-phosphohistidine intermediate) is an active-site residue.

This sequence belongs to the NDK family. In terms of assembly, homotetramer. Requires Mg(2+) as cofactor.

Its subcellular location is the cytoplasm. It carries out the reaction a 2'-deoxyribonucleoside 5'-diphosphate + ATP = a 2'-deoxyribonucleoside 5'-triphosphate + ADP. It catalyses the reaction a ribonucleoside 5'-diphosphate + ATP = a ribonucleoside 5'-triphosphate + ADP. Major role in the synthesis of nucleoside triphosphates other than ATP. The ATP gamma phosphate is transferred to the NDP beta phosphate via a ping-pong mechanism, using a phosphorylated active-site intermediate. This is Nucleoside diphosphate kinase from Wolbachia sp. subsp. Brugia malayi (strain TRS).